We begin with the raw amino-acid sequence, 474 residues long: Tumor necrosis factor receptor superfamily member 1B (474 aa).

The first 22 residues, 1-22 (MAPAALWVALVFELQLWATGHT), serve as a signal peptide directing secretion. The Extracellular portion of the chain corresponds to 23 to 258 (VPAQVVLTPY…PIIEQSTKGG (236 aa)). The O-linked (GalNAc...) threonine glycan is linked to Thr-30. 4 TNFR-Cys repeats span residues 39-77 (ECQI…TVCA), 78-119 (DCEA…NRVC), 120-164 (ACEA…VLCK), and 165-203 (ACAP…AVCA). 10 cysteine pairs are disulfide-bonded: Cys-40/Cys-54, Cys-55/Cys-68, Cys-58/Cys-76, Cys-79/Cys-94, Cys-97/Cys-111, Cys-101/Cys-119, Cys-121/Cys-127, Cys-136/Cys-145, Cys-139/Cys-163, and Cys-166/Cys-181. Asn-69 carries an N-linked (GlcNAc...) asparagine glycan. An N-linked (GlcNAc...) asparagine glycan is attached at Asn-195. O-linked (GalNAc...) threonine glycosylation is found at Thr-208 and Thr-224. The disordered stretch occupies residues 220-243 (QPEPTRSQPLDQEPGPSQTPSILT). A helical membrane pass occupies residues 259-288 (ISLPIGLIVGVTSLGLLMLGLVNCIILVQR). At 289 to 474 (KKKPSCLQRD…WFDQIAVKVA (186 aa)) the chain is on the cytoplasmic side. Disordered stretches follow at residues 295-314 (LQRD…DAVG), 321-378 (LTTA…GSHG), and 397-463 (SQCS…PSQA). Over residues 297-310 (RDAKVPHVPDEKSQ) the composition is skewed to basic and acidic residues. Low complexity-rich tracts occupy residues 324–338 (APSS…SASA) and 363–378 (ARAS…GSHG). Position 331 is a phosphoserine (Ser-331). A compositionally biased stretch (polar residues) spans 429–442 (ECPSQSPCETTETL).

As to quaternary structure, binds to TRAF2. Interacts with BMX. Interacts (activated form) with XPNPEP3.

It localises to the membrane. Receptor with high affinity for TNFSF2/TNF-alpha and approximately 5-fold lower affinity for homotrimeric TNFSF1/lymphotoxin-alpha. The TRAF1/TRAF2 complex recruits the apoptotic suppressors BIRC2 and BIRC3 to TNFRSF1B/TNFR2. The protein is Tumor necrosis factor receptor superfamily member 1B (Tnfrsf1b) of Mus musculus (Mouse).